The primary structure comprises 77 residues: Large ribosomal subunit protein bL28 (77 aa).

The interval 1–25 (MARVCQVTGKAPMSGNNVSHANNKT) is disordered.

The protein belongs to the bacterial ribosomal protein bL28 family.

This Paraburkholderia phymatum (strain DSM 17167 / CIP 108236 / LMG 21445 / STM815) (Burkholderia phymatum) protein is Large ribosomal subunit protein bL28.